We begin with the raw amino-acid sequence, 420 residues long: Tyrosine--tRNA ligase (420 aa).

Tyrosine 33 provides a ligand contact to L-tyrosine. The 'HIGH' region motif lies at 38 to 47 (PTADSLHVGH). 2 residues coordinate L-tyrosine: tyrosine 167 and glutamine 171. The 'KMSKS' region signature appears at 227 to 231 (KFGKT). Lysine 230 contributes to the ATP binding site. Residues 353 to 419 (LTVADLLVKV…GKRNYALVKV (67 aa)) enclose the S4 RNA-binding domain.

It belongs to the class-I aminoacyl-tRNA synthetase family. TyrS type 1 subfamily. Homodimer.

It localises to the cytoplasm. The enzyme catalyses tRNA(Tyr) + L-tyrosine + ATP = L-tyrosyl-tRNA(Tyr) + AMP + diphosphate + H(+). Its function is as follows. Catalyzes the attachment of tyrosine to tRNA(Tyr) in a two-step reaction: tyrosine is first activated by ATP to form Tyr-AMP and then transferred to the acceptor end of tRNA(Tyr). The chain is Tyrosine--tRNA ligase from Anaeromyxobacter dehalogenans (strain 2CP-C).